The chain runs to 1337 residues: Sister chromatid cohesion protein PDS5 homolog A (1337 aa).

Methionine 1 carries the N-acetylmethionine modification. Residues 393–429 form an HEAT repeat; the sequence is ALVNDQLLGFVRERTLDKRWRVRKEAMMGLAQLYKKY. Serine 1097 carries the phosphoserine modification. An N6-acetyllysine modification is found at lysine 1146. The segment at 1150 to 1337 is disordered; that stretch reads ATGRKPYVRS…PAERQIDLQR (188 aa). The span at 1159–1180 shows a compositional bias: polar residues; that stretch reads STGTETGSNINVNSELNPSTGN. Serine 1195 is modified (phosphoserine). Position 1208 is a phosphothreonine (threonine 1208). Lysine 1211 bears the N6-acetyllysine mark. A compositionally biased stretch (polar residues) spans 1223–1233; that stretch reads SDQATQGNISS. Lysine 1290 is modified (N6-acetyllysine). At serine 1305 the chain carries Phosphoserine. Residues 1321–1337 are compositionally biased toward basic and acidic residues; the sequence is DLAKKAAPAERQIDLQR.

It belongs to the PDS5 family. In terms of assembly, interacts with the cohesin complex. Interacts with WAPL (via FGF motifs) or CDCA5 (via the FGF motif); the interaction is direct, cohesin-dependent and competitive. Interacts with SMC3. Interacts with TP63. As to expression, highest level in colon. Low levels in lung, ovary, breast and kidney. Reduced level in renal tumor tissue. Isoform 2 is expressed in kidney.

It is found in the nucleus. In terms of biological role, probable regulator of sister chromatid cohesion in mitosis which may stabilize cohesin complex association with chromatin. May couple sister chromatid cohesion during mitosis to DNA replication. Cohesion ensures that chromosome partitioning is accurate in both meiotic and mitotic cells and plays an important role in DNA repair. The sequence is that of Sister chromatid cohesion protein PDS5 homolog A from Homo sapiens (Human).